The chain runs to 116 residues: Putative BPES syndrome breakpoint region protein (116 aa).

In terms of tissue distribution, seems to be expressed only in testis.

The chain is Putative BPES syndrome breakpoint region protein (BPESC1) from Homo sapiens (Human).